We begin with the raw amino-acid sequence, 334 residues long: Dual specificity mitogen-activated protein kinase kinase 6 (334 aa).

Residues 1 to 11 (MSQSKGKKRNP) show a composition bias toward basic residues. Residues 1 to 34 (MSQSKGKKRNPGLKIPKEAFEQPQTSSTPPRDLD) are disordered. The segment at 4 to 19 (SKGKKRNPGLKIPKEA) is d domain. Residues 53-314 (LEPIVELGRG…YPELMQHPFF (262 aa)) enclose the Protein kinase domain. Residues 59–67 (LGRGAYGVV) and Lys-82 each bind ATP. Asp-179 serves as the catalytic Proton acceptor. Ser-207 is modified (phosphoserine; by MAPK3). At Thr-211 the chain carries Phosphothreonine; by MAPK3. Residues 311–334 (HPFFTVHESKAADVASFVKLILGD) are DVD domain.

It belongs to the protein kinase superfamily. STE Ser/Thr protein kinase family. MAP kinase kinase subfamily. In terms of assembly, dimer. Interacts (via its D domain) with its substrates MAPK11, MAPK12, MAPK13 and MAPK14. Interacts (via its DVD domain) with MAP3Ks activators like MAP3K5/ASK1, MAP3K1/MEKK1, MAP3K2/MEKK2, MAP3K3/MEKK3, MAP3K4/MEKK4, MAP3K7/TAK1, MAP3K11/MLK3 and MAP3K17/TAOK2. Interacts with DCTN1. Interacts with EIF2AK2/PKR. Post-translationally, weakly autophosphorylated. Phosphorylated at Ser-207 and Thr-211 by the majority of M3Ks, such as MAP3K5/ASK1, MAP3K1/MEKK1, MAP3K2/MEKK2, MAP3K3/MEKK3, MAP3K4/MEKK4, MAP3K7/TAK1, MAP3K11/MLK3 and MAP3K17/TAOK2. In terms of processing, in response to genotoxic stress, MAP3K-phosphorylated MAP2K6 is ubiquitinated and degraded by the SCF(FBXO31) complex.

It is found in the nucleus. The protein resides in the cytoplasm. Its subcellular location is the cytoskeleton. The enzyme catalyses L-seryl-[protein] + ATP = O-phospho-L-seryl-[protein] + ADP + H(+). It catalyses the reaction L-threonyl-[protein] + ATP = O-phospho-L-threonyl-[protein] + ADP + H(+). The catalysed reaction is L-tyrosyl-[protein] + ATP = O-phospho-L-tyrosyl-[protein] + ADP + H(+). Activated by dual phosphorylation on Ser-207 and Thr-211 in response to a variety of cellular stresses, including UV radiation, osmotic shock, hypoxia, inflammatory cytokines, interferon gamma (IFNG), and less often by growth factors. MAP2K6/MKK6 is activated by the majority of M3Ks, such as MAP3K5/ASK1, MAP3K1/MEKK1, MAP3K2/MEKK2, MAP3K3/MEKK3, MAP3K4/MEKK4, MAP3K7/TAK1, MAP3K11/MLK3 and MAP3K17/TAOK2. In terms of biological role, dual specificity protein kinase which acts as an essential component of the MAP kinase signal transduction pathway. With MAP3K3/MKK3, catalyzes the concomitant phosphorylation of a threonine and a tyrosine residue in the MAP kinases p38 MAPK11, MAPK12, MAPK13 and MAPK14 and plays an important role in the regulation of cellular responses to cytokines and all kinds of stresses. Especially, MAP2K3/MKK3 and MAP2K6/MKK6 are both essential for the activation of MAPK11 and MAPK13 induced by environmental stress, whereas MAP2K6/MKK6 is the major MAPK11 activator in response to TNF. MAP2K6/MKK6 also phosphorylates and activates PAK6. The p38 MAP kinase signal transduction pathway leads to direct activation of transcription factors. Nuclear targets of p38 MAP kinase include the transcription factors ATF2 and ELK1. Within the p38 MAPK signal transduction pathway, MAP3K6/MKK6 mediates phosphorylation of STAT4 through MAPK14 activation, and is therefore required for STAT4 activation and STAT4-regulated gene expression in response to IL-12 stimulation. The pathway is also crucial for IL-6-induced SOCS3 expression and down-regulation of IL-6-mediated gene induction; and for IFNG-dependent gene transcription. Has a role in osteoclast differentiation through NF-kappa-B transactivation by TNFSF11, and in endochondral ossification and since SOX9 is another likely downstream target of the p38 MAPK pathway. MAP2K6/MKK6 mediates apoptotic cell death in thymocytes. Acts also as a regulator for melanocytes dendricity, through the modulation of Rho family GTPases. This Mus musculus (Mouse) protein is Dual specificity mitogen-activated protein kinase kinase 6 (Map2k6).